Consider the following 120-residue polypeptide: Aspartate 1-decarboxylase (120 aa).

Residue S25 is the Schiff-base intermediate with substrate; via pyruvic acid of the active site. S25 is subject to Pyruvic acid (Ser). T57 is a binding site for substrate. Catalysis depends on Y58, which acts as the Proton donor. Position 73–75 (G73–A75) interacts with substrate.

The protein belongs to the PanD family. In terms of assembly, heterooctamer of four alpha and four beta subunits. The cofactor is pyruvate. Post-translationally, is synthesized initially as an inactive proenzyme, which is activated by self-cleavage at a specific serine bond to produce a beta-subunit with a hydroxyl group at its C-terminus and an alpha-subunit with a pyruvoyl group at its N-terminus.

The protein localises to the cytoplasm. It catalyses the reaction L-aspartate + H(+) = beta-alanine + CO2. The protein operates within cofactor biosynthesis; (R)-pantothenate biosynthesis; beta-alanine from L-aspartate: step 1/1. In terms of biological role, catalyzes the pyruvoyl-dependent decarboxylation of aspartate to produce beta-alanine. In Polynucleobacter asymbioticus (strain DSM 18221 / CIP 109841 / QLW-P1DMWA-1) (Polynucleobacter necessarius subsp. asymbioticus), this protein is Aspartate 1-decarboxylase.